Reading from the N-terminus, the 107-residue chain is Proteinase inhibitor 1 (107 aa).

The first 23 residues, 1-23, serve as a signal peptide directing secretion; sequence MELKFAHIIVFFLLATSFETLMA. The propeptide occupies 24 to 36; that stretch reads RKESDGPEVIQLL.

It belongs to the protease inhibitor I13 (potato type I serine protease inhibitor) family.

This chain is Proteinase inhibitor 1, found in Solanum tuberosum (Potato).